Consider the following 200-residue polypeptide: RPW8-like protein 4 (200 aa).

The 157-residue stretch at 1–157 folds into the RPW8 domain; the sequence is MPIAELAVIK…MKAIQVDQWT (157 aa). A helical transmembrane segment spans residues 7–29; it reads AVIKTVGGPLIAAALGVGAQVIY. A coiled-coil region spans residues 70–127; sequence REVHESLTRLLEDAKSIIEKYWKLRWSRHVCRKYRYIKKLESIELELVRVAREIQVHQ.

It belongs to the plant RPW8 protein family.

It is found in the membrane. Its function is as follows. Probable disease resistance (R) protein. The polypeptide is RPW8-like protein 4 (HR4) (Arabidopsis thaliana (Mouse-ear cress)).